The chain runs to 755 residues: Metabotropic glutamate receptor-like protein B (755 aa).

The N-terminal stretch at 1-23 (MKNLISIILLILIFFNYSKFVKS) is a signal peptide. Residues Asn16, Asn183, and Asn273 are each glycosylated (N-linked (GlcNAc...) asparagine). The Extracellular segment spans residues 24-385 (KNCKIAVLLS…VDYSSSMKLG (362 aa)). The chain crosses the membrane as a helical span at residues 386-406 (ITITSSICIFLCIISIIIVLV). Residues 407–417 (FRTARIIKSAS) are Cytoplasmic-facing. The chain crosses the membrane as a helical span at residues 418–438 (PAFLFLILMGCILIFIGCIIF). Over 439-455 (SQSPNEGTCRARVWLLS) the chain is Extracellular. The helical transmembrane segment at 456–476 (IGYTIFLGSLLVKNWRIWLLF) threads the bilayer. Over 477 to 492 (DNPKLKKRSITNWKLY) the chain is Cytoplasmic. A helical membrane pass occupies residues 493–513 (PWVAGILAADVLILAFWQGLG). Topologically, residues 514–541 (NIRSESRIGIDSLTKYQYTNVCSSNDQG) are extracellular. A helical membrane pass occupies residues 542–562 (SIALYILLVFHGIKLLVACFI). Topologically, residues 563-578 (SFKIKVVDIDEFNESK) are cytoplasmic. A helical membrane pass occupies residues 579-599 (PIASSVYIITFCLFIVIPLMV). At 600 to 607 (SPQSVTSQ) the chain is on the extracellular side. The chain crosses the membrane as a helical span at residues 608–628 (VTTICVCAIVTTLISIILLFG). The Cytoplasmic portion of the chain corresponds to 629–755 (SKFYKMITQG…GEVEIDSNNL (127 aa)). 2 disordered regions span residues 656 to 676 (QSLE…EENG) and 691 to 729 (FSSD…NIEE). The span at 694–710 (DTEDDENETQQIDEEKD) shows a compositional bias: acidic residues.

It in the N-terminal section; belongs to the BMP lipoprotein family. This sequence in the C-terminal section; belongs to the G-protein coupled receptor 3 family. GABA-B receptor subfamily.

It localises to the membrane. The protein is Metabotropic glutamate receptor-like protein B (grlB) of Dictyostelium discoideum (Social amoeba).